We begin with the raw amino-acid sequence, 327 residues long: GTPase Obg (327 aa).

Residues 1–159 (MQFIDQANII…WEVQLELKLL (159 aa)) form the Obg domain. Residues 160-327 (AEVGIIGLPN…SLLSEVWKRI (168 aa)) form the OBG-type G domain. ATP is bound by residues 166–173 (GLPNAGKS), 191–195 (FTTLI), 213–216 (DIPG), 280–283 (NKIE), and 309–311 (SSS). 2 residues coordinate Mg(2+): S173 and T193.

Belongs to the TRAFAC class OBG-HflX-like GTPase superfamily. OBG GTPase family. As to quaternary structure, monomer. Requires Mg(2+) as cofactor.

It localises to the cytoplasm. Functionally, an essential GTPase which binds GTP, GDP and possibly (p)ppGpp with moderate affinity, with high nucleotide exchange rates and a fairly low GTP hydrolysis rate. Plays a role in control of the cell cycle, stress response, ribosome biogenesis and in those bacteria that undergo differentiation, in morphogenesis control. The sequence is that of GTPase Obg from Prochlorococcus marinus (strain AS9601).